Consider the following 253-residue polypeptide: Major prion protein (253 aa).

Positions 1-22 (MANLGCWMLVLFVATWSDLGLC) are cleaved as a signal peptide. Residues 23–230 (KKRPKPGGWN…ESQAYYQRGS (208 aa)) are interaction with GRB2, ERI3 and SYN1. The interval 26-108 (PKPGGWNTGG…WHKPSKPKTS (83 aa)) is disordered. A run of 5 repeats spans residues 51–59 (PQGGGGWGQ), 60–67 (PHGGGWGQ), 68–75 (PHGGGWGQ), 76–83 (PHGGGWGQ), and 84–91 (PHGGGWGQ). Residues 51–91 (PQGGGGWGQPHGGGWGQPHGGGWGQPHGGGWGQPHGGGWGQ) form a 5 X 8 AA tandem repeats of P-H-G-G-G-W-G-Q region. A compositionally biased stretch (gly residues) spans 52 to 95 (QGGGGWGQPHGGGWGQPHGGGWGQPHGGGWGQPHGGGWGQGGGT). 12 residues coordinate Cu(2+): histidine 61, glycine 62, glycine 63, histidine 69, glycine 70, glycine 71, histidine 77, glycine 78, glycine 79, histidine 85, glycine 86, and glycine 87. A compositionally biased stretch (basic residues) spans 98–108 (QWHKPSKPKTS). Cysteine 179 and cysteine 214 are disulfide-bonded. Residues asparagine 181 and asparagine 197 are each glycosylated (N-linked (GlcNAc...) asparagine). Residue serine 230 is the site of GPI-anchor amidated serine attachment. The propeptide at 231-253 (SMVLFSSPPVILLISFLIFLIVG) is removed in mature form.

This sequence belongs to the prion family. In terms of assembly, monomer and homodimer. Has a tendency to aggregate into amyloid fibrils containing a cross-beta spine, formed by a steric zipper of superposed beta-strands. Soluble oligomers may represent an intermediate stage on the path to fibril formation. Copper binding may promote oligomerization. Interacts with GRB2, APP, ERI3/PRNPIP and SYN1. Mislocalized cytosolically exposed PrP interacts with MGRN1; this interaction alters MGRN1 subcellular location and causes lysosomal enlargement. Interacts with KIAA1191.

It is found in the cell membrane. The protein resides in the golgi apparatus. Its primary physiological function is unclear. Has cytoprotective activity against internal or environmental stresses. May play a role in neuronal development and synaptic plasticity. May be required for neuronal myelin sheath maintenance. May play a role in iron uptake and iron homeostasis. Soluble oligomers are toxic to cultured neuroblastoma cells and induce apoptosis (in vitro). Association with GPC1 (via its heparan sulfate chains) targets PRNP to lipid rafts. Also provides Cu(2+) or Zn(2+) for the ascorbate-mediated GPC1 deaminase degradation of its heparan sulfate side chains. The polypeptide is Major prion protein (PRNP) (Macaca fascicularis (Crab-eating macaque)).